The following is a 513-amino-acid chain: GMP synthase [glutamine-hydrolyzing] (513 aa).

Residues 3–192 (TVVVLDYGSQ…VSKVAKMEKN (190 aa)) form the Glutamine amidotransferase type-1 domain. The Nucleophile role is filled by C80. Catalysis depends on residues H166 and E168. Positions 193–388 (WKMTDFIEEK…LGLPDEMINR (196 aa)) constitute a GMPS ATP-PPase domain. 220–226 (SGGVDSS) contributes to the ATP binding site.

In terms of assembly, homodimer.

It catalyses the reaction XMP + L-glutamine + ATP + H2O = GMP + L-glutamate + AMP + diphosphate + 2 H(+). Its pathway is purine metabolism; GMP biosynthesis; GMP from XMP (L-Gln route): step 1/1. Its function is as follows. Catalyzes the synthesis of GMP from XMP. In Thermosipho africanus (strain TCF52B), this protein is GMP synthase [glutamine-hydrolyzing].